The chain runs to 626 residues: Polyphenol oxidase C, chloroplastic (626 aa).

The N-terminal 83 residues, 1–83 (MASLCSNSST…ANAIPLAASA (83 aa)), are a transit peptide targeting the chloroplast. 2 disulfide bridges follow: Cys94–Cys110 and Cys109–Cys177. 6 residues coordinate Cu cation: His176, His194, His203, His324, His328, and His366. A cross-link (2'-(S-cysteinyl)-histidine (Cys-His)) is located at residues 180-194 (CNGGYSIDGKVLQVH).

Belongs to the tyrosinase family. Requires Cu(2+) as cofactor.

It is found in the plastid. Its subcellular location is the chloroplast thylakoid lumen. It catalyses the reaction 2 catechol + O2 = 2 1,2-benzoquinone + 2 H2O. In terms of biological role, catalyzes the oxidation of mono- and o-diphenols to o-diquinones. The polypeptide is Polyphenol oxidase C, chloroplastic (Solanum lycopersicum (Tomato)).